The primary structure comprises 73 residues: Salivary protein FS48 (73 aa).

An N-terminal signal peptide occupies residues 1-21; that stretch reads MKFAFAIFVVLAILHTELISA.

Its subcellular location is the secreted. Functionally, salivary protein that inhibits host voltage-gated potassium channels Kv1.1/KCNA1, Kv1.2/KCNA2 and Kv1.3/KCNA3 likely via a voltage-independent pore-blocking mechanism. Suppresses expression of the Kv1.3/KCNA3 channel in lipopolysaccharide (LPS)-stimulated mouse macrophages and human T-cells. Down-regulates secretion of nitric oxide (NO) and inflammatory cytokines, such as TNF-alpha/TNF, IL-1beta/IL1B and IL6, in LPS-stimulated mouse macrophages in a manner dependent on Kv1.3/KCNA3 channel blockage. Reduces activation of MAPK and NF-kappa-B signaling pathways in LPS-stimulated mouse macrophages. Modulates intracellular Ca(2+) signaling in human PMA/ionomycin-triggered T-cells. Interferes with the activation of the MAPK, NF-kappa-B and NFATc1 pathways in human PMA/ionomycin-triggered T-cells. Reduces proliferation of human PMA/ionomycin-triggered T-cells. Down-regulates secretion of cytokines, such as TNF-alpha/TNF and IL2, in human PMA/ionomycin-triggered T-cells. This Xenopsylla cheopis (Oriental rat flea) protein is Salivary protein FS48.